Reading from the N-terminus, the 504-residue chain is Histidine ammonia-lyase (504 aa).

Residues 142 to 144 (ASG) constitute a cross-link (5-imidazolinone (Ala-Gly)). Residue Ser143 is modified to 2,3-didehydroalanine (Ser).

It belongs to the PAL/histidase family. Contains an active site 4-methylidene-imidazol-5-one (MIO), which is formed autocatalytically by cyclization and dehydration of residues Ala-Ser-Gly.

It is found in the cytoplasm. It catalyses the reaction L-histidine = trans-urocanate + NH4(+). The protein operates within amino-acid degradation; L-histidine degradation into L-glutamate; N-formimidoyl-L-glutamate from L-histidine: step 1/3. This chain is Histidine ammonia-lyase, found in Staphylococcus aureus (strain MRSA252).